Here is a 319-residue protein sequence, read N- to C-terminus: ATP-dependent 6-phosphofructokinase (319 aa).

Position 11 (Gly-11) interacts with ATP. 21–25 provides a ligand contact to ADP; sequence RAVVR. ATP is bound by residues 72–73 and 102–105; these read RC and GDGS. Asp-103 contacts Mg(2+). 125–127 is a substrate binding site; it reads TID. The active-site Proton acceptor is the Asp-127. Arg-154 is a binding site for ADP. Substrate contacts are provided by residues Arg-162 and 169 to 171; that span reads MGR. Residues 185 to 187, Arg-211, and 213 to 215 each bind ADP; these read GAE and KKH. Residues Glu-222, Arg-243, and 249 to 252 contribute to the substrate site; that span reads HVQR.

It belongs to the phosphofructokinase type A (PFKA) family. ATP-dependent PFK group I subfamily. Prokaryotic clade 'B1' sub-subfamily. Homotetramer. Mg(2+) is required as a cofactor.

The protein localises to the cytoplasm. It catalyses the reaction beta-D-fructose 6-phosphate + ATP = beta-D-fructose 1,6-bisphosphate + ADP + H(+). Its pathway is carbohydrate degradation; glycolysis; D-glyceraldehyde 3-phosphate and glycerone phosphate from D-glucose: step 3/4. With respect to regulation, allosterically activated by ADP and other diphosphonucleosides, and allosterically inhibited by phosphoenolpyruvate. In terms of biological role, catalyzes the phosphorylation of D-fructose 6-phosphate to fructose 1,6-bisphosphate by ATP, the first committing step of glycolysis. The chain is ATP-dependent 6-phosphofructokinase from Bacillus cereus (strain B4264).